A 140-amino-acid chain; its full sequence is Probable lipoprotein LppE (140 aa).

Positions 1 to 21 (MCNRLVTVTGVAMVVAAGLSA) are cleaved as a signal peptide. A lipid anchor (N-palmitoyl cysteine) is attached at Cys-22. A lipid anchor (S-diacylglycerol cysteine) is attached at Cys-22.

The protein belongs to the mycobacterial 19 kDa antigen family.

It is found in the cell membrane. The polypeptide is Probable lipoprotein LppE (lppE) (Mycobacterium tuberculosis (strain ATCC 25618 / H37Rv)).